A 237-amino-acid chain; its full sequence is NAD-dependent protein deacylase (237 aa).

In terms of domain architecture, Deacetylase sirtuin-type spans 1-235 (MRVVVLSGAG…PGLLQRLPAL (235 aa)). 8–28 (GAGISAESDVPTFRDDKNGLW) lines the NAD(+) pocket. Substrate is bound by residues Tyr53 and Arg56. 86–89 (QNVD) is an NAD(+) binding site. His104 (proton acceptor) is an active-site residue. Cys112, Cys115, Cys138, and Cys140 together coordinate Zn(2+). Residues 177-179 (GTS), 203-205 (NPE), and Ala221 contribute to the NAD(+) site.

Belongs to the sirtuin family. Class III subfamily. The cofactor is Zn(2+).

It is found in the cytoplasm. The catalysed reaction is N(6)-acetyl-L-lysyl-[protein] + NAD(+) + H2O = 2''-O-acetyl-ADP-D-ribose + nicotinamide + L-lysyl-[protein]. It catalyses the reaction N(6)-succinyl-L-lysyl-[protein] + NAD(+) + H2O = 2''-O-succinyl-ADP-D-ribose + nicotinamide + L-lysyl-[protein]. NAD-dependent lysine deacetylase and desuccinylase that specifically removes acetyl and succinyl groups on target proteins. Modulates the activities of several proteins which are inactive in their acylated form. This chain is NAD-dependent protein deacylase, found in Mycobacterium leprae (strain TN).